Consider the following 445-residue polypeptide: Gasdermin-A (445 aa).

The interval methionine 1–glycine 251 is triggers pyroptosis. Position 9-13 (arginine 9–arginine 13) interacts with a cardiolipin. Transmembrane regions (beta stranded) follow at residues asparagine 78–valine 95, valine 99–valine 120, valine 163–phenylalanine 179, and leucine 183–isoleucine 197.

The protein belongs to the gasdermin family. In terms of assembly, homooligomer; homooligomeric ring-shaped pore complex containing 18-36 subunits when inserted in the membrane. Cleavage by S.pyogenes SpeB relieves autoinhibition by releasing the N-terminal moiety (Gasdermin-A, N-terminal) that initiates pyroptosis. Post-translationally, palmitoylated. Expressed predominantly in the gastrointestinal tract and, at a lower level, in the skin. Also detected in mammary gland. In the gastrointestinal tract, mainly expressed in differentiated cells, including the differentiated cell layer of esophagus and mucus-secreting pit cells of the gastric epithelium. Down-regulated in gastric cancer cells.

It is found in the cytoplasm. The protein resides in the perinuclear region. Its subcellular location is the cytosol. The protein localises to the cell membrane. With respect to regulation, the full-length protein before cleavage is inactive: intramolecular interactions between N- and C-terminal domains mediate autoinhibition in the absence of activation signal. The intrinsic pyroptosis-inducing activity is carried by the released N-terminal moiety (Gasdermin-A, N-terminal) following cleavage by S.pyogenes effector protein SpeB. Its function is as follows. This form constitutes the precursor of the pore-forming protein and acts as a sensor of infection: upon infection by S.pyogenes, specifically cleaved by S.pyogenes effector protein SpeB in epithelial cells, releasing the N-terminal moiety (Gasdermin-A, N-terminal) that binds to membranes and forms pores, triggering pyroptosis. In terms of biological role, pore-forming protein that causes membrane permeabilization and pyroptosis. Released upon cleavage by S.pyogenes effector protein SpeB, and binds to membrane inner leaflet lipids. Homooligomerizes within the membrane and forms pores of 10-15 nanometers (nm) of inner diameter, triggering pyroptosis. Pyroptosis triggers the elimination of the infected skin cell, depriving the pathogen of its protective niche, while inducing an inflammatory response. This ultimately prevents bacterial penetration of the epithelial barrier and a subsequent systemic dissemination of the pathogen. Binds to cardiolipin and other acidic phospholipids, such as phosphatidylserine, which mediate its targeting to the inner leaflet membrane. The chain is Gasdermin-A from Homo sapiens (Human).